Consider the following 1295-residue polypeptide: Phosphoribosylformylglycinamidine synthase (1295 aa).

Residues 302 to 327 are disordered; that stretch reads SPWPGASTGSGGEIRDEGATGRGAKP. Residues 306-317 and Ala-677 each bind ATP; that span reads GASTGSGGEIRD. Mg(2+)-binding residues include Asp-678, Glu-717, Asn-721, and Asp-884. Ser-886 contacts ATP. One can recognise a Glutamine amidotransferase type-1 domain in the interval 1042-1295; it reads VAVLREQGVN…IFRNARKQLG (254 aa). Residue Cys-1135 is the Nucleophile of the active site. Catalysis depends on residues His-1260 and Glu-1262.

It in the N-terminal section; belongs to the FGAMS family. In terms of assembly, monomer.

It is found in the cytoplasm. The catalysed reaction is N(2)-formyl-N(1)-(5-phospho-beta-D-ribosyl)glycinamide + L-glutamine + ATP + H2O = 2-formamido-N(1)-(5-O-phospho-beta-D-ribosyl)acetamidine + L-glutamate + ADP + phosphate + H(+). It participates in purine metabolism; IMP biosynthesis via de novo pathway; 5-amino-1-(5-phospho-D-ribosyl)imidazole from N(2)-formyl-N(1)-(5-phospho-D-ribosyl)glycinamide: step 1/2. Functionally, phosphoribosylformylglycinamidine synthase involved in the purines biosynthetic pathway. Catalyzes the ATP-dependent conversion of formylglycinamide ribonucleotide (FGAR) and glutamine to yield formylglycinamidine ribonucleotide (FGAM) and glutamate. In Photorhabdus laumondii subsp. laumondii (strain DSM 15139 / CIP 105565 / TT01) (Photorhabdus luminescens subsp. laumondii), this protein is Phosphoribosylformylglycinamidine synthase.